A 75-amino-acid chain; its full sequence is U6-lycotoxin-Ls1d (75 aa).

Residues 1-21 form the signal peptide; the sequence is MKLLLFTALVLVVISLIEVEA. The propeptide occupies 22–25; it reads ENER.

This sequence belongs to the neurotoxin 19 (CSTX) family. 06 (U6-Lctx) subfamily. Contains 4 disulfide bonds. Expressed by the venom gland.

The protein resides in the secreted. This is U6-lycotoxin-Ls1d from Lycosa singoriensis (Wolf spider).